A 398-amino-acid polypeptide reads, in one-letter code: Phosphoglycerate kinase (398 aa).

Substrate is bound by residues aspartate 20–asparagine 22, arginine 35, histidine 58–lysine 61, arginine 118, and arginine 155. ATP is bound by residues lysine 208, glycine 296, glutamate 327, and glycine 354 to serine 357.

Belongs to the phosphoglycerate kinase family. In terms of assembly, monomer.

It is found in the cytoplasm. The enzyme catalyses (2R)-3-phosphoglycerate + ATP = (2R)-3-phospho-glyceroyl phosphate + ADP. Its pathway is carbohydrate degradation; glycolysis; pyruvate from D-glyceraldehyde 3-phosphate: step 2/5. This Fusobacterium nucleatum subsp. nucleatum (strain ATCC 25586 / DSM 15643 / BCRC 10681 / CIP 101130 / JCM 8532 / KCTC 2640 / LMG 13131 / VPI 4355) protein is Phosphoglycerate kinase.